The chain runs to 863 residues: DNA mismatch repair protein MutS (863 aa).

607-614 (GPNMAGKS) is an ATP binding site.

Belongs to the DNA mismatch repair MutS family.

In terms of biological role, this protein is involved in the repair of mismatches in DNA. It is possible that it carries out the mismatch recognition step. This protein has a weak ATPase activity. This is DNA mismatch repair protein MutS from Caldicellulosiruptor bescii (strain ATCC BAA-1888 / DSM 6725 / KCTC 15123 / Z-1320) (Anaerocellum thermophilum).